We begin with the raw amino-acid sequence, 272 residues long: 5'-nucleotidase SurE (272 aa).

4 residues coordinate a divalent metal cation: aspartate 28, aspartate 29, serine 59, and asparagine 115.

Belongs to the SurE nucleotidase family. A divalent metal cation is required as a cofactor.

The protein localises to the cytoplasm. It catalyses the reaction a ribonucleoside 5'-phosphate + H2O = a ribonucleoside + phosphate. Functionally, nucleotidase that shows phosphatase activity on nucleoside 5'-monophosphates. This Chlorobium chlorochromatii (strain CaD3) protein is 5'-nucleotidase SurE.